Here is a 182-residue protein sequence, read N- to C-terminus: Transcription termination/antitermination protein NusG (182 aa).

This sequence belongs to the NusG family.

Participates in transcription elongation, termination and antitermination. The protein is Transcription termination/antitermination protein NusG of Chlamydia trachomatis serovar D (strain ATCC VR-885 / DSM 19411 / UW-3/Cx).